The sequence spans 119 residues: Small ribosomal subunit protein uS13 (119 aa).

The segment at 96-119 is disordered; that stretch reads PVRGQRTKTNARTRKGPRKLIKSR.

This sequence belongs to the universal ribosomal protein uS13 family. As to quaternary structure, part of the 30S ribosomal subunit. Forms a loose heterodimer with protein S19. Forms two bridges to the 50S subunit in the 70S ribosome.

Located at the top of the head of the 30S subunit, it contacts several helices of the 16S rRNA. In the 70S ribosome it contacts the 23S rRNA (bridge B1a) and protein L5 of the 50S subunit (bridge B1b), connecting the 2 subunits; these bridges are implicated in subunit movement. Contacts the tRNAs in the A and P-sites. The chain is Small ribosomal subunit protein uS13 from Buchnera aphidicola subsp. Cinara cedri (strain Cc).